Consider the following 313-residue polypeptide: Solute carrier family 25 member 36 (313 aa).

Solcar repeat units follow at residues 4–110, 118–205, and 226–310; these read RDTL…CKEK, DSTQ…IKRK, and SDFV…VVYL. Helical transmembrane passes span 7–27, 41–57, 113–133, 182–202, 228–248, and 293–313; these read LVHL…TCPL, LYIS…ASVN, NIFN…AGFT, MSAS…YESI, FVGM…IAYP, and QIPN…LLDG.

Belongs to the mitochondrial carrier (TC 2.A.29) family.

Its subcellular location is the mitochondrion inner membrane. Mitochondrial transporter that imports/exports pyrimidine nucleotides into and from mitochondria. Transports preferentially cytosine and uracil (deoxy)nucleoside mono-, di-, and triphosphates by uniport and antiport mechanism. The sequence is that of Solute carrier family 25 member 36 (SLC25A36) from Gallus gallus (Chicken).